The sequence spans 513 residues: 2-isopropylmalate synthase (513 aa).

One can recognise a Pyruvate carboxyltransferase domain in the interval 4–266 (IEFFDTSLRD…QSPLKLSETA (263 aa)). Mn(2+) is bound by residues aspartate 13, histidine 201, histidine 203, and asparagine 237. Residues 390-513 (ILDNVQIDGH…VEQISAHDGI (124 aa)) are regulatory domain.

The protein belongs to the alpha-IPM synthase/homocitrate synthase family. LeuA type 1 subfamily. Homodimer. It depends on Mn(2+) as a cofactor.

Its subcellular location is the cytoplasm. It carries out the reaction 3-methyl-2-oxobutanoate + acetyl-CoA + H2O = (2S)-2-isopropylmalate + CoA + H(+). The protein operates within amino-acid biosynthesis; L-leucine biosynthesis; L-leucine from 3-methyl-2-oxobutanoate: step 1/4. Its function is as follows. Catalyzes the condensation of the acetyl group of acetyl-CoA with 3-methyl-2-oxobutanoate (2-ketoisovalerate) to form 3-carboxy-3-hydroxy-4-methylpentanoate (2-isopropylmalate). The polypeptide is 2-isopropylmalate synthase (Lactococcus lactis subsp. lactis (strain IL1403) (Streptococcus lactis)).